A 103-amino-acid chain; its full sequence is MYAVFQSGGKQHRVSEGQTVRLEKLDIATGETVEFAEVLMIANGEEVKIGVPFVDGGVIKAEVVAHGRGEKVKIVKFRRRKHYRKQQGHRQWFTDVKITGISA.

The protein belongs to the bacterial ribosomal protein bL21 family. As to quaternary structure, part of the 50S ribosomal subunit. Contacts protein L20.

In terms of biological role, this protein binds to 23S rRNA in the presence of protein L20. The polypeptide is Large ribosomal subunit protein bL21 (Escherichia coli O127:H6 (strain E2348/69 / EPEC)).